The following is a 214-amino-acid chain: Anti-sigma-F factor NrsF (214 aa).

The Cytoplasmic segment spans residues 1–25; that stretch reads MRTDDLIDALAADAGRGTEPAPPRR. The helical transmembrane segment at 26–46 threads the bilayer; that stretch reads LALVAGLGGVAALLLVLGWLQ. Topologically, residues 47-53 are periplasmic; it reads ARPDLGQ. The helical transmembrane segment at 54–74 threads the bilayer; sequence AILGPMFWVKAIYTGLLGLAG. Residues 75–90 are Cytoplasmic-facing; it reads YLAVERLSRPGGSGRR. The chain crosses the membrane as a helical span at residues 91-111; sequence GWIIGAVVFGACAVAGIYQAI. Topologically, residues 112-134 are periplasmic; sequence TSPDVQAALKLLHGYSWRSCSPR. A helical membrane pass occupies residues 135–155; it reads ILVLGLPMLALGLWALRGMAP. The Cytoplasmic segment spans residues 156–158; it reads TRP. The helical transmembrane segment at 159–179 threads the bilayer; it reads GLAGFAMGLFSGGVVATLYGL. At 180–185 the chain is on the periplasmic side; sequence HCPEHT. The chain crosses the membrane as a helical span at residues 186 to 206; sequence FTFLALWYSLGVLALGLIGGW. Residues 207–214 are Cytoplasmic-facing; that stretch reads AGRWLLRW.

The protein belongs to the NrsF anti-sigma-F factor family.

The protein localises to the cell inner membrane. An anti-sigma factor for extracytoplasmic function (ECF) sigma factor sigma-F (SigF), which responds to chromate and cadmium. Overexpression leads to loss of response to dichromate. ECF sigma factors are held in an inactive form by a cognate anti-sigma factor. This chain is Anti-sigma-F factor NrsF, found in Caulobacter vibrioides (strain NA1000 / CB15N) (Caulobacter crescentus).